The following is a 104-amino-acid chain: Pyrimidine/purine nucleoside phosphorylase (104 aa).

The protein belongs to the nucleoside phosphorylase PpnP family.

The enzyme catalyses a purine D-ribonucleoside + phosphate = a purine nucleobase + alpha-D-ribose 1-phosphate. It catalyses the reaction adenosine + phosphate = alpha-D-ribose 1-phosphate + adenine. It carries out the reaction cytidine + phosphate = cytosine + alpha-D-ribose 1-phosphate. The catalysed reaction is guanosine + phosphate = alpha-D-ribose 1-phosphate + guanine. The enzyme catalyses inosine + phosphate = alpha-D-ribose 1-phosphate + hypoxanthine. It catalyses the reaction thymidine + phosphate = 2-deoxy-alpha-D-ribose 1-phosphate + thymine. It carries out the reaction uridine + phosphate = alpha-D-ribose 1-phosphate + uracil. The catalysed reaction is xanthosine + phosphate = alpha-D-ribose 1-phosphate + xanthine. Its function is as follows. Catalyzes the phosphorolysis of diverse nucleosides, yielding D-ribose 1-phosphate and the respective free bases. Can use uridine, adenosine, guanosine, cytidine, thymidine, inosine and xanthosine as substrates. Also catalyzes the reverse reactions. This Herminiimonas arsenicoxydans protein is Pyrimidine/purine nucleoside phosphorylase.